We begin with the raw amino-acid sequence, 572 residues long: Phosphoglucomutase-1 (572 aa).

Residues Thr-23, Arg-27, 120–121 (SH), and Lys-133 contribute to the substrate site. The active-site Phosphoserine intermediate is the Ser-120. Ser-120 is a binding site for Mg(2+). Mg(2+)-binding residues include Asp-288, Asp-290, and Asp-292. Substrate contacts are provided by residues 292-293 (DR), Thr-356, 375-377 (EES), Lys-388, and Arg-524.

Belongs to the phosphohexose mutase family. It depends on Mg(2+) as a cofactor.

It is found in the cytoplasm. The catalysed reaction is alpha-D-glucose 1-phosphate = alpha-D-glucose 6-phosphate. Its function is as follows. This enzyme participates in both the breakdown and synthesis of glucose. This chain is Phosphoglucomutase-1 (pgmA), found in Dictyostelium discoideum (Social amoeba).